Consider the following 250-residue polypeptide: MSRAAMDRAEFERALRDKGRYYHIHHPFHVAMYEGRASREQIQGWVANRFYYQVNIPLKDAAILANCPDREVRREWIQRILDHDGAPGEAGGIEAWLRLAEAVGLEREQVLSEERVLPGVRFAVDAYVNFARRASWQEAASSSLTELFAPQIHQSRLDSWPRHYPWIEAAGYEYFRSRLAQARRDVEHGLRITLEHYRTREAQERMLDILQFKLDVLWSMLDAMSMAYELERPPYHTVTRERVWHRGLAS.

It belongs to the PqqC family.

It catalyses the reaction 6-(2-amino-2-carboxyethyl)-7,8-dioxo-1,2,3,4,7,8-hexahydroquinoline-2,4-dicarboxylate + 3 O2 = pyrroloquinoline quinone + 2 H2O2 + 2 H2O + H(+). The protein operates within cofactor biosynthesis; pyrroloquinoline quinone biosynthesis. Ring cyclization and eight-electron oxidation of 3a-(2-amino-2-carboxyethyl)-4,5-dioxo-4,5,6,7,8,9-hexahydroquinoline-7,9-dicarboxylic-acid to PQQ. This chain is Pyrroloquinoline-quinone synthase, found in Pseudomonas aeruginosa (strain LESB58).